Consider the following 101-residue polypeptide: Urease subunit beta (101 aa).

It belongs to the urease beta subunit family. As to quaternary structure, heterotrimer of UreA (gamma), UreB (beta) and UreC (alpha) subunits. Three heterotrimers associate to form the active enzyme.

The protein localises to the cytoplasm. It catalyses the reaction urea + 2 H2O + H(+) = hydrogencarbonate + 2 NH4(+). It functions in the pathway nitrogen metabolism; urea degradation; CO(2) and NH(3) from urea (urease route): step 1/1. The polypeptide is Urease subunit beta (Saccharophagus degradans (strain 2-40 / ATCC 43961 / DSM 17024)).